A 636-amino-acid chain; its full sequence is Polyglycine hydrolase (636 aa).

Positions 1-22 are cleaved as a signal peptide; sequence MHSLSLRRLLTSVLSLCSCSSA. N-linked (GlcNAc...) asparagine glycosylation is found at N30 and N151. An intrachain disulfide couples C141 to C175. The active site involves S363. N-linked (GlcNAc...) asparagine glycosylation is found at N383 and N481. Positions 512–540 are disordered; sequence TEDRIVQESKNTGQDPVHPQSAKLVPGPH.

It belongs to the peptidase S12 family.

Its subcellular location is the secreted. The enzyme catalyses a glycyl-glycyl-[protein] + H2O = N-terminal glycyl-[protein] + [protein]-C-terminal glycine. In terms of biological role, serine-type endopeptidase that cleaves Gly-Gly bonds in the polyglycine linker of host plant class IV chitinases to disrupt their chitin-binding, and thereby plays a role in lowering the defense responses of the host to the fungus. Degrades Z.mays Endochitinase A (CHIA) in vitro, although corn is not its host species. This is Polyglycine hydrolase from Fusarium vanettenii (strain ATCC MYA-4622 / CBS 123669 / FGSC 9596 / NRRL 45880 / 77-13-4) (Fusarium solani subsp. pisi).